The following is a 348-amino-acid chain: Protein pelota homolog (348 aa).

Belongs to the eukaryotic release factor 1 family. Pelota subfamily. In terms of assembly, monomer. It depends on a divalent metal cation as a cofactor.

It is found in the cytoplasm. Its function is as follows. May function in recognizing stalled ribosomes, interact with stem-loop structures in stalled mRNA molecules, and effect endonucleolytic cleavage of the mRNA. May play a role in the release non-functional ribosomes and degradation of damaged mRNAs. Has endoribonuclease activity. The sequence is that of Protein pelota homolog from Methanococcus aeolicus (strain ATCC BAA-1280 / DSM 17508 / OCM 812 / Nankai-3).